The sequence spans 284 residues: MKIVLISGLSGSGKSVALRQMEDSGYFCVDNLPLEMLPALVSYHIERADETELAVSVDVRSGIDIGQAREQIASLRGLGHRVEVLFVEAEEAVLVRRFSETRRGHPLSNQDMTLLESLKKEREWLFPLKEIAYCIDTSKMNAQQLRHAVRQWLKVERTGLLVILEFFGFKYGVPNNADFMFDMRSLPNPYYDPELRPYTGMDKPVWDYLDGQPLVQEMVDDIERFVTHWLPRLEDESRSYVTVAIGCTGGQHRSVYVVEKLARRLKGRYELLIRHRQAQNLSDR.

An ATP-binding site is contributed by 8–15 (GLSGSGKS). Residue 58–61 (DVRS) coordinates GTP.

It belongs to the RapZ-like family.

Its function is as follows. Displays ATPase and GTPase activities. This chain is Nucleotide-binding protein NMC0691, found in Neisseria meningitidis serogroup C / serotype 2a (strain ATCC 700532 / DSM 15464 / FAM18).